Consider the following 497-residue polypeptide: MPPMTKAEGKQDKKAQQYGVTPQSVDFNDWYNEVVKKADLADNSPVAGAMVVKPYGTALWENIQRWLDDRFKATGHESLIFPTLIPMNFITKEADHVEGFAPELFTVDRIGTEQLTEPYVLRPTSETIIGYMWSGWLNSYRDLPFLHYQWGSVFRAELRTKAFLRTSEFYWHEGHTAHASEEEARREVRQILDLYHEFCRDILALPVVRGEKTASERFAGAVATYSIEGMMRDGKALQSGTSHYLGQNFSKAFDVKFQTREQREEYAYTTSWAISSRIIGAIIMTHGDDFGLIMPPRIAPIQVVVIPVSRKENFDQMVAEGEKLAHELRAQGLRVKVDRREGVTNGFKYNDWELKGVPVRIELGPRDLEQGVVVVKNRNAEEKETLPREEAIRGMANRLDSIHNWLLQRATDFLLTHTVPADSYEELKNAIEHGNWVRAFHCGNAECEAQIKEDTKATTRNIPLDDAEFFNEREEGVCVKCGQPSAYGKRVIFGRQY.

Belongs to the class-II aminoacyl-tRNA synthetase family. ProS type 3 subfamily. In terms of assembly, homodimer.

It is found in the cytoplasm. It carries out the reaction tRNA(Pro) + L-proline + ATP = L-prolyl-tRNA(Pro) + AMP + diphosphate. In terms of biological role, catalyzes the attachment of proline to tRNA(Pro) in a two-step reaction: proline is first activated by ATP to form Pro-AMP and then transferred to the acceptor end of tRNA(Pro). The polypeptide is Proline--tRNA ligase (Deinococcus geothermalis (strain DSM 11300 / CIP 105573 / AG-3a)).